A 561-amino-acid polypeptide reads, in one-letter code: Putative transport protein YbjL (561 aa).

A run of 5 helical transmembrane segments spans residues 8 to 28 (LLNG…LCLG), 32 to 52 (LGSI…LLGQ), 66 to 86 (FMLF…SIFF), 94 to 114 (MLAL…GKLF), and 158 to 178 (NLSL…IVGA). RCK C-terminal domains are found at residues 200–288 (RGLD…SFRN) and 292–373 (VFDR…RIGF). The next 5 membrane-spanning stretches (helical) occupy residues 383–403 (LLAF…TFQF), 406–426 (FSFG…LGFM), 451–471 (VFMA…LGAI), 475–495 (MLIA…LFGA), and 540–560 (AIAN…WPGL).

It belongs to the AAE transporter (TC 2.A.81) family. YbjL subfamily.

It is found in the cell membrane. This chain is Putative transport protein YbjL, found in Shigella flexneri.